Reading from the N-terminus, the 279-residue chain is Probable endonuclease 4 (279 aa).

Zn(2+) is bound by residues His-69, His-109, Glu-145, Asp-179, His-182, His-216, Asp-229, His-231, and Glu-261.

The protein belongs to the AP endonuclease 2 family. Requires Zn(2+) as cofactor.

The catalysed reaction is Endonucleolytic cleavage to 5'-phosphooligonucleotide end-products.. Functionally, endonuclease IV plays a role in DNA repair. It cleaves phosphodiester bonds at apurinic or apyrimidinic (AP) sites, generating a 3'-hydroxyl group and a 5'-terminal sugar phosphate. The sequence is that of Probable endonuclease 4 from Buchnera aphidicola subsp. Schizaphis graminum (strain Sg).